Consider the following 344-residue polypeptide: N-acetyl-gamma-glutamyl-phosphate reductase (344 aa).

C148 is a catalytic residue.

The protein belongs to the NAGSA dehydrogenase family. Type 1 subfamily.

It is found in the cytoplasm. The catalysed reaction is N-acetyl-L-glutamate 5-semialdehyde + phosphate + NADP(+) = N-acetyl-L-glutamyl 5-phosphate + NADPH + H(+). It functions in the pathway amino-acid biosynthesis; L-arginine biosynthesis; N(2)-acetyl-L-ornithine from L-glutamate: step 3/4. In terms of biological role, catalyzes the NADPH-dependent reduction of N-acetyl-5-glutamyl phosphate to yield N-acetyl-L-glutamate 5-semialdehyde. The protein is N-acetyl-gamma-glutamyl-phosphate reductase of Clostridium beijerinckii (strain ATCC 51743 / NCIMB 8052) (Clostridium acetobutylicum).